The chain runs to 575 residues: Beta-amylase 1, chloroplastic (575 aa).

The N-terminal 41 residues, 1–41 (MALNLSHQLGVLAGTPIKSGEMTDSSLLSISPPSARMMTPK), are a transit peptide targeting the chloroplast. Phosphoserine occurs at positions 55 and 59. A disulfide bond links cysteine 73 and cysteine 511. The substrate site is built by aspartate 147, histidine 187, and aspartate 195. The active-site Proton donor is the glutamate 279. Residues lysine 392, histidine 397, and threonine 439 each contribute to the substrate site. Glutamate 477 (proton acceptor) is an active-site residue. Residues 478-479 (NA) and arginine 517 contribute to the substrate site.

The protein belongs to the glycosyl hydrolase 14 family. As to expression, expressed in leaves, roots, flowers, pollen, and seeds.

It localises to the plastid. The protein localises to the chloroplast. It catalyses the reaction Hydrolysis of (1-&gt;4)-alpha-D-glucosidic linkages in polysaccharides so as to remove successive maltose units from the non-reducing ends of the chains.. Redox regulation; active in reducing conditions, inactive in oxidizing conditions. Thioredoxins f1, m1, and y1 mediate the reversible reductive activation of oxidized BAM1. Its function is as follows. Beta-amylase activity. Can use p-nitrophenyl maltopentaoside (PNPG5) as substrate only in reduced form. Can play a minor role in the starch degradation and maltose metabolism in chloroplasts during the night. More active on phosphorylated glucan. Interacts directly with starch or other alpha-1,4-glucan. The protein is Beta-amylase 1, chloroplastic (BAM1) of Arabidopsis thaliana (Mouse-ear cress).